A 217-amino-acid polypeptide reads, in one-letter code: Uridylate kinase (217 aa).

6 to 10 (KLSGR) serves as a coordination point for ATP. G38 is a binding site for UMP. Residues G39 and R43 each contribute to the ATP site. Residues D60 and 107 to 113 (FQPGQST) contribute to the UMP site. Positions 134, 139, and 142 each coordinate ATP.

It belongs to the UMP kinase family. In terms of assembly, homohexamer.

The protein localises to the cytoplasm. The catalysed reaction is UMP + ATP = UDP + ADP. It functions in the pathway pyrimidine metabolism; CTP biosynthesis via de novo pathway; UDP from UMP (UMPK route): step 1/1. Its activity is regulated as follows. Inhibited by UTP. Functionally, catalyzes the reversible phosphorylation of UMP to UDP. This Pyrobaculum aerophilum (strain ATCC 51768 / DSM 7523 / JCM 9630 / CIP 104966 / NBRC 100827 / IM2) protein is Uridylate kinase.